Here is a 394-residue protein sequence, read N- to C-terminus: 4-O-methyl-glucuronoyl methylesterase (394 aa).

Residues 1-18 (MVHLTPALLLASAAFAAA) form the signal peptide. Disulfide bonds link Cys29–Cys63, Cys210–Cys345, and Cys242–Cys317. Positions 209 to 214 (GCSRNG) match the GXSYXG catalytic site motif motif. The active-site Nucleophile is Ser211. Residues Lys215, Gln257, Glu265, and Trp308 each coordinate substrate. His344 serves as the catalytic Proton donor/acceptor.

Belongs to the carbohydrate esterase 15 (CE15) family.

It localises to the secreted. It catalyses the reaction a 4-O-methyl-alpha-D-glucuronosyl ester derivative + H2O = 4-O-methyl-alpha-D-glucuronate derivative + an alcohol + H(+). Glucuronoyl esterase which may play a significant role in biomass degradation, as it is considered to disconnect hemicellulose from lignin through the hydrolysis of the ester bond between 4-O-methyl-D-glucuronic acid residues of glucuronoxylans and aromatic alcohols of lignin. The polypeptide is 4-O-methyl-glucuronoyl methylesterase (Neurospora crassa (strain ATCC 24698 / 74-OR23-1A / CBS 708.71 / DSM 1257 / FGSC 987)).